A 324-amino-acid chain; its full sequence is Anthranilate phosphoribosyltransferase (324 aa).

Residues Gly72, 75–76 (GD), Thr80, 82–85 (NVST), 99–107 (KHGNVSVTS), and Ser111 each bind 5-phospho-alpha-D-ribose 1-diphosphate. Gly72 contacts anthranilate. Ser84 contributes to the Mg(2+) binding site. Asn102 provides a ligand contact to anthranilate. Residue Arg157 participates in anthranilate binding. The Mg(2+) site is built by Asp215 and Glu216.

This sequence belongs to the anthranilate phosphoribosyltransferase family. In terms of assembly, homodimer. Requires Mg(2+) as cofactor.

The enzyme catalyses N-(5-phospho-beta-D-ribosyl)anthranilate + diphosphate = 5-phospho-alpha-D-ribose 1-diphosphate + anthranilate. It functions in the pathway amino-acid biosynthesis; L-tryptophan biosynthesis; L-tryptophan from chorismate: step 2/5. In terms of biological role, catalyzes the transfer of the phosphoribosyl group of 5-phosphorylribose-1-pyrophosphate (PRPP) to anthranilate to yield N-(5'-phosphoribosyl)-anthranilate (PRA). This is Anthranilate phosphoribosyltransferase from Pyrococcus furiosus (strain ATCC 43587 / DSM 3638 / JCM 8422 / Vc1).